Here is a 1376-residue protein sequence, read N- to C-terminus: YLP motif-containing protein 1 (1376 aa).

Disordered stretches follow at residues 1–335 (MYPN…PEED) and 511–1058 (STIP…PPGR). A compositionally biased stretch (pro residues) spans 14–27 (YPPPPVPPPPPPVA). 2 stretches are compositionally biased toward low complexity: residues 31-50 (ASPG…SSSG) and 59-80 (LAQL…LQPH). Pro residues-rich tracts occupy residues 81 to 93 (HLPP…PPVM), 102 to 114 (QPPP…PPGP), 148 to 158 (PESPPVPPGSY), 166 to 176 (MPPPQPPPSYY), and 184 to 204 (YLPP…PPSI). Composition is skewed to polar residues over residues 207–216 (GNKTTIQQEP) and 238–260 (STMT…LQQR). Over residues 261–271 (TKVHLPGHKKG) the composition is skewed to basic residues. Residues 277–286 (DVPEPIKEEA) are compositionally biased toward basic and acidic residues. Pro residues-rich tracts occupy residues 303–320 (PPLP…PPEE), 511–537 (STIP…PGMP), 545–594 (LPPP…PQGM), and 632–641 (PPSPYHPPPQ). Residues 642-671 (SEQGNSKPLNKVFSSEQGLGESSSALSQSV) show a composition bias toward polar residues. Lys-675 is subject to N6-methyllysine. Basic and acidic residues predominate over residues 698 to 714 (RGPREQKEQLQKLKDFG). Composition is skewed to pro residues over residues 738–753 (MYPP…PMGK), 773–796 (TRPP…PPVI), and 840–870 (PVLP…PPPV). A Glycyl lysine isopeptide (Lys-Gly) (interchain with G-Cter in SUMO2) cross-link involves residue Lys-886. Basic and acidic residues-rich tracts occupy residues 896 to 930 (ITLR…EPYF), 937 to 1004 (TDHR…DRPP), 1013 to 1023 (GERRTYPEERM), and 1039 to 1058 (RVEK…PPGR). Lys-943 participates in a covalent cross-link: Glycyl lysine isopeptide (Lys-Gly) (interchain with G-Cter in SUMO2). The involved in interaction with PPP1CA stretch occupies residues 1326–1333 (KKRVRWAD).

As to quaternary structure, interacts with PPP1CA and NCOA5. Forms a complex with ILF2, ILF3, KHDRBS1, RBMX, NCOA5 and PPP1CA. In terms of tissue distribution, high level expression seen in the brain, adipose tissue, heart and kidney, with a low level expression in muscle, spleen and lung (at protein level).

The protein resides in the nucleus. Its subcellular location is the nucleus speckle. Functionally, plays a role in the reduction of telomerase activity during differentiation of embryonic stem cells by binding to the core promoter of TERT and controlling its down-regulation. This chain is YLP motif-containing protein 1 (Ylpm1), found in Rattus norvegicus (Rat).